The chain runs to 787 residues: MAERRICLSKEAKDGLEFLKRKKLQKMRSDSVNETVGFSTMARSGGDALRPTSASCGMRLRVTSSDTVSKVHGASTVRGGLMKEKVEKLETDDLKWTERLPECPVYRPTKEEFEDPLTYLQKIFPEASKYGICKIVSPLTATVPAGAVLMKEKSNFKFTTRVQPLRLAEWDSDDKVTFFMSGRTYTFRDYEKMANKVFARRYCSGGSLPDSFLEKEFWKEIACGKTETVEYACDVDGSAFSSAPGDPLGSSKWNLNKVSRLPKSTLRLLETSIPGVTEPMLYIGMLFSMFAWHVEDHYLYSINYQHCGASKTWYGIPGSAALKFEKVVKECVYNDDILSTNGEDGAFDVLLGKTTIFPPKTLLDHNVPVYKAVQKPGEFVVTFPRAYHAGFSHGFNCGEAVNFAMGDWFPFGAIASCRYAHLNRVPLLPHEELICKEAMLLNSSSKSENLDLTPTELSGQRSIKTAFVHLIRFLHLARWSLMKSGLCTGLVSNTYGTIVCSLCKRDCYLAFINCECYSHPVCLRHDVKKLDLPCGTTHTLYLRDNIEDMEAAAMKFEKEDGVSDLITTDEDLYKYPSSITLPAAKEDGYTPYSTIYFDFYTEVEMTSHDQLQSGNPVMSYEANASCISSVADDYECSDYVNRRANCSSSSDSKLSEEVACSSSKKTRFFPVVQDEQLVADQESDGSDSECFRVKRRSSLKFENRTVVLDTRESDHHQELKRLKKSHHHEGRYSSSSSVSRQEEEEDELVISNRKETQQQSDVKMQKKRIENHFGGFKRLKVKGLIKP.

Residues 103-144 enclose the JmjN domain; that stretch reads CPVYRPTKEEFEDPLTYLQKIFPEASKYGICKIVSPLTATVP. The JmjC domain occupies 250–420; that stretch reads SSKWNLNKVS…FGAIASCRYA (171 aa). 3 residues coordinate Fe cation: histidine 293, glutamate 295, and histidine 388. Zn(2+) is bound by residues cysteine 500, cysteine 503, cysteine 514, cysteine 516, histidine 519, cysteine 522, histidine 525, and cysteine 534. The segment at 500-551 adopts a C4HCHC zinc-finger fold; sequence CSLCKRDCYLAFINCECYSHPVCLRHDVKKLDLPCGTTHTLYLRDNIEDMEA. The segment at 500 to 551 adopts a C5HC2 zinc-finger fold; that stretch reads CSLCKRDCYLAFINCECYSHPVCLRHDVKKLDLPCGTTHTLYLRDNIEDMEA. In terms of domain architecture, FYR N-terminal spans 617–675; that stretch reads VMSYEANASCISSVADDYECSDYVNRRANCSSSSDSKLSEEVACSSSKKTRFFPVVQDE. An FYR C-terminal domain is found at 677-756; the sequence is LVADQESDGS…ELVISNRKET (80 aa). The segment at 712 to 769 is disordered; that stretch reads ESDHHQELKRLKKSHHHEGRYSSSSSVSRQEEEEDELVISNRKETQQQSDVKMQKKRI. The short motif at 752-759 is the Nuclear localization signal element; that stretch reads NRKETQQQ.

This sequence belongs to the JARID1 histone demethylase family. The cofactor is Fe(2+). In terms of tissue distribution, mostly expressed in leaves, and, to a lower extent, in inflorescences, roots, siliques and stems.

The protein resides in the nucleus. It catalyses the reaction N(6),N(6),N(6)-trimethyl-L-lysyl(27)-[histone H3] + 2-oxoglutarate + O2 = N(6),N(6)-dimethyl-L-lysyl(27)-[histone H3] + formaldehyde + succinate + CO2. In terms of biological role, histone demethylase that demethylates 'Lys-27' (H3K27me) of histone H3 with a specific activity for H3K27me3 and involved in the regulation of gene expression. Acts as a temperature and photoperiod dependent flowering repressor. The polypeptide is Lysine-specific demethylase JMJ13 (Arabidopsis thaliana (Mouse-ear cress)).